A 106-amino-acid chain; its full sequence is Large ribosomal subunit protein bL21 (106 aa).

This sequence belongs to the bacterial ribosomal protein bL21 family. As to quaternary structure, part of the 50S ribosomal subunit. Contacts protein L20.

In terms of biological role, this protein binds to 23S rRNA in the presence of protein L20. This chain is Large ribosomal subunit protein bL21, found in Fervidobacterium nodosum (strain ATCC 35602 / DSM 5306 / Rt17-B1).